Consider the following 343-residue polypeptide: Methionine import ATP-binding protein MetN (343 aa).

The ABC transporter domain occupies 2–241 (IKLSNITKVF…PKTPLAQKFI (240 aa)). 38–45 (GASGAGKS) serves as a coordination point for ATP.

This sequence belongs to the ABC transporter superfamily. Methionine importer (TC 3.A.1.24) family. The complex is composed of two ATP-binding proteins (MetN), two transmembrane proteins (MetI) and a solute-binding protein (MetQ).

It localises to the cell inner membrane. It catalyses the reaction L-methionine(out) + ATP + H2O = L-methionine(in) + ADP + phosphate + H(+). The enzyme catalyses D-methionine(out) + ATP + H2O = D-methionine(in) + ADP + phosphate + H(+). Part of the ABC transporter complex MetNIQ involved in methionine import. Responsible for energy coupling to the transport system. In Escherichia coli O6:K15:H31 (strain 536 / UPEC), this protein is Methionine import ATP-binding protein MetN.